The chain runs to 270 residues: NAD kinase (270 aa).

The active-site Proton acceptor is the D45. Residues 45–46 (DG), 121–122 (NE), R147, D149, 160–165 (TAYSKS), and A184 contribute to the NAD(+) site.

It belongs to the NAD kinase family. The cofactor is a divalent metal cation.

It is found in the cytoplasm. It carries out the reaction NAD(+) + ATP = ADP + NADP(+) + H(+). In terms of biological role, involved in the regulation of the intracellular balance of NAD and NADP, and is a key enzyme in the biosynthesis of NADP. Catalyzes specifically the phosphorylation on 2'-hydroxyl of the adenosine moiety of NAD to yield NADP. This chain is NAD kinase, found in Lactobacillus helveticus (strain DPC 4571).